The sequence spans 199 residues: Holliday junction branch migration complex subunit RuvA (199 aa).

Positions 1 to 63 (MIGCLIGEVF…EDAQQLYGFS (63 aa)) are domain I. A domain II region spans residues 64–142 (DAQEKTIFRT…TLAQGTSSAA (79 aa)). Residues 143-150 (ALPQIQFV) form a flexible linker region. A domain III region spans residues 150–199 (VSNSPVAEAEAALQSLGYKPLEAQKAVAAVKADYTESADIIRAALKSMMK).

It belongs to the RuvA family. As to quaternary structure, homotetramer. Forms an RuvA(8)-RuvB(12)-Holliday junction (HJ) complex. HJ DNA is sandwiched between 2 RuvA tetramers; dsDNA enters through RuvA and exits via RuvB. An RuvB hexamer assembles on each DNA strand where it exits the tetramer. Each RuvB hexamer is contacted by two RuvA subunits (via domain III) on 2 adjacent RuvB subunits; this complex drives branch migration. In the full resolvosome a probable DNA-RuvA(4)-RuvB(12)-RuvC(2) complex forms which resolves the HJ.

The protein resides in the cytoplasm. Functionally, the RuvA-RuvB-RuvC complex processes Holliday junction (HJ) DNA during genetic recombination and DNA repair, while the RuvA-RuvB complex plays an important role in the rescue of blocked DNA replication forks via replication fork reversal (RFR). RuvA specifically binds to HJ cruciform DNA, conferring on it an open structure. The RuvB hexamer acts as an ATP-dependent pump, pulling dsDNA into and through the RuvAB complex. HJ branch migration allows RuvC to scan DNA until it finds its consensus sequence, where it cleaves and resolves the cruciform DNA. The chain is Holliday junction branch migration complex subunit RuvA from Acinetobacter baumannii (strain ACICU).